The sequence spans 199 residues: Probable GTP-binding protein EngB (199 aa).

In terms of domain architecture, EngB-type G spans 28–199; it reads DLPEIALAGR…DSWDAILEQV (172 aa). GTP contacts are provided by residues 36-43, 63-67, 81-84, 148-151, and 180-182; these read GRSNVGKS, GKTQL, DVPG, TKAD, and FSS. Mg(2+)-binding residues include Ser-43 and Thr-65.

Belongs to the TRAFAC class TrmE-Era-EngA-EngB-Septin-like GTPase superfamily. EngB GTPase family. It depends on Mg(2+) as a cofactor.

In terms of biological role, necessary for normal cell division and for the maintenance of normal septation. The sequence is that of Probable GTP-binding protein EngB from Streptococcus pyogenes serotype M6 (strain ATCC BAA-946 / MGAS10394).